Reading from the N-terminus, the 677-residue chain is Secretogranin-1 (677 aa).

The N-terminal stretch at 1–20 (MQPTLLLSLLGAVGLAAVNS) is a signal peptide. Cysteines 36 and 57 form a disulfide. Basic and acidic residues-rich tracts occupy residues 64-100 (SRKD…ESSS) and 118-136 (ADTE…RADE). Residues 64-463 (SRKDVKDKET…DKARRHPQGA (400 aa)) form a disordered region. The residue at position 79 (Thr79) is a Phosphothreonine. A phosphoserine mark is found at Ser93, Ser99, and Ser100. Ser93 carries O-linked (Xyl...) (chondroitin sulfate) serine glycosylation. The O-glycosylated at one site stretch occupies residues 116–120 (TKADT). Ser130 carries the phosphoserine; by FAM20C modification. A Phosphoserine modification is found at Ser149. 3 stretches are compositionally biased toward basic and acidic residues: residues 150–162 (EEVK…KSQR), 172–190 (NYQK…HLEE), and 200–236 (NERK…EKSS). Ser183 is subject to Phosphoserine. Ser225 is modified (phosphoserine; by FAM20C). Ser239 carries O-linked (Xyl...) (chondroitin sulfate) serine glycosylation. 2 positions are modified to phosphoserine: Ser259 and Ser263. Positions 262 to 272 (ESEEGEEDATS) are enriched in acidic residues. Residues 277–287 (RRTRPRHHHGR) show a composition bias toward basic residues. 4 positions are modified to phosphoserine: Ser293, Ser294, Ser311, and Ser335. Tyr341 carries the post-translational modification Sulfotyrosine. Over residues 359–372 (WERYRGRGSEEYRA) the composition is skewed to basic and acidic residues. Residues Ser367, Ser377, and Ser380 each carry the phosphoserine; by FAM20C modification. Basic and acidic residues-rich tracts occupy residues 384 to 415 (EDKR…EPGK) and 433 to 455 (DTRE…QMDK). Tyr401 carries the post-translational modification Phosphotyrosine. Ser405 carries the post-translational modification Phosphoserine. Sulfotyrosine is present on Tyr474. The disordered stretch occupies residues 475–512 (GEEGAPGKWQQQGDLQDTKENREEARFQDKQYSSHHTA). Residues 490 to 503 (QDTKENREEARFQD) show a composition bias toward basic and acidic residues. Phosphoserine is present on residues Ser533 and Ser534. The residue at position 566 (Tyr566) is a Sulfotyrosine. Ser617 bears the Phosphoserine mark. Positions 622 to 653 (DFYDSEEPVSTHQEAENEKDRADQTVLTEDEK) are disordered. At Tyr624 the chain carries Sulfotyrosine. A phosphoserine mark is found at Ser626 and Ser631. Positions 634 to 653 (QEAENEKDRADQTVLTEDEK) are enriched in basic and acidic residues.

The protein belongs to the chromogranin/secretogranin protein family. Interacts with ITPR1 in the secretory granules. Extensively processed by limited proteolysis at conserved basic residues. Alternative processing are seen in different tissues. Post-translationally, O-glycosylated. In terms of tissue distribution, detected in cerebrospinal fluid and urine (at protein level). Expressed in the adrenal medulla, and in pheochromocytoma. Not expressed in liver.

It is found in the secreted. Secretogranin-1 is a neuroendocrine secretory granule protein, which may be the precursor for other biologically active peptides. In Homo sapiens (Human), this protein is Secretogranin-1 (CHGB).